Consider the following 627-residue polypeptide: uncharacterized protein (627 aa).

Disordered regions lie at residues 141–187 (LRYP…TPPS) and 490–510 (ENEN…GPRT). A compositionally biased stretch (polar residues) spans 491–510 (NENTNGSANNSTYTNGGPRT). A Phosphoserine modification is found at Ser559.

This is an uncharacterized protein from Saccharomyces cerevisiae (strain ATCC 204508 / S288c) (Baker's yeast).